The following is a 198-amino-acid chain: ATP synthase protein MI25 (198 aa).

The helical transmembrane segment at 29–49 threads the bilayer; the sequence is ISIYNEEMIVALCFIGFIIFS.

Belongs to the ATPase protein MI25 family. As to quaternary structure, F-type ATPases have 2 components, CF(1) - the catalytic core - and CF(0) - the membrane proton channel. CF(1) has five subunits: alpha(3), beta(3), gamma(1), delta(1), epsilon(1). CF(0) has three main subunits: a, b and c.

It is found in the mitochondrion membrane. In terms of biological role, this is one of the chains of the nonenzymatic component (CF(0) subunit) of the mitochondrial ATPase complex. The polypeptide is ATP synthase protein MI25 (Nicotiana tabacum (Common tobacco)).